Here is a 1114-residue protein sequence, read N- to C-terminus: Filamentous growth regulator 23 (1114 aa).

Positions 1 to 21 (MFASYLLLVLWIIRLVPTTHA) are cleaved as a signal peptide. 2 disordered regions span residues 232-256 (GSET…PSTT) and 284-314 (SSSI…TSSS). Residues 240–252 (TTAPKPVETPSPE) are compositionally biased toward pro residues. 11 N-linked (GlcNAc...) asparagine glycosylation sites follow: N382, N397, N475, N490, N506, N539, N565, N591, N637, N687, and N739. The segment at 392–430 (SETTTNESSSYTDEPSSSEEITNTYEPSSSTESSTTDQF) is disordered. Residues 764–784 (TSTLTSSHTSDNEKPASLSSS) are disordered. The N-linked (GlcNAc...) asparagine glycan is linked to N831. Low complexity-rich tracts occupy residues 844–910 (SASS…SSSS) and 922–941 (SSSV…ESSS). The interval 844-963 (SASSSYHSSE…ANENTSEITT (120 aa)) is disordered. The segment covering 942–963 (NGLVSTVTESSTANENTSEITT) has biased composition (polar residues). N-linked (GlcNAc...) asparagine glycosylation is found at N957, N966, and N1070. N1089 carries the GPI-anchor amidated asparagine lipid modification. A propeptide spans 1090-1114 (ANSLGLKNGDNSWIIGIMMIGLLMI) (removed in mature form).

It is found in the cell membrane. Its function is as follows. Putative adhesin which may be involved in cell adhesion and virulence. Involved in the regulation of filamentous growth. The protein is Filamentous growth regulator 23 (FGR23) of Candida albicans (strain SC5314 / ATCC MYA-2876) (Yeast).